The chain runs to 228 residues: Ribose-5-phosphate isomerase A (228 aa).

Substrate is bound by residues 32 to 35, 85 to 88, and 98 to 101; these read TGST, DGAD, and KGGG. E107 (proton acceptor) is an active-site residue. Residue K125 coordinates substrate.

The protein belongs to the ribose 5-phosphate isomerase family. In terms of assembly, homodimer.

It carries out the reaction aldehydo-D-ribose 5-phosphate = D-ribulose 5-phosphate. It functions in the pathway carbohydrate degradation; pentose phosphate pathway; D-ribose 5-phosphate from D-ribulose 5-phosphate (non-oxidative stage): step 1/1. Catalyzes the reversible conversion of ribose-5-phosphate to ribulose 5-phosphate. In Cupriavidus pinatubonensis (strain JMP 134 / LMG 1197) (Cupriavidus necator (strain JMP 134)), this protein is Ribose-5-phosphate isomerase A.